The primary structure comprises 596 residues: Inactive metallocarboxypeptidase ecm14 (596 aa).

A signal peptide spans 1–26 (MSQSHSILSSLILLVAIIFCVPHVIA). Positions 27–190 (VPWTTDGHAQ…SYPSMAYADA (164 aa)) are excised as a propeptide. A glycan (N-linked (GlcNAc...) asparagine) is linked at asparagine 114. The Peptidase M14 domain maps to 220 to 540 (NYQPLSVIIP…NVIKYFGDFL (321 aa)). The Zn(2+) site is built by histidine 285 and glutamate 288. Substrate contacts are provided by residues 285-288 (HARE), arginine 343, and 360-361 (DR). A disulfide bridge links cysteine 354 with cysteine 376. A glycan (N-linked (GlcNAc...) asparagine) is linked at asparagine 400. Histidine 416 lines the Zn(2+) pocket. Residue 417–418 (SY) coordinates substrate.

It belongs to the peptidase M14 family. Zn(2+) is required as a cofactor.

It is found in the vacuole. The protein resides in the secreted. Inactive carboxypeptidase that may play a role in cell wall organization and biogenesis. This Sclerotinia sclerotiorum (strain ATCC 18683 / 1980 / Ss-1) (White mold) protein is Inactive metallocarboxypeptidase ecm14 (ecm14).